The following is a 584-amino-acid chain: MKNLQRPSGMPAHKYTPYHQNFPFDMSDRTWPDKVATTAPRWCAVDLRDGNQALIDPMDSERKLRMFQLLVGMGYKEIEVGFPSASQTDFDFVRTLVEGGHIPEDVSIQVLTQSREHLIERTYEAIDGAPNAIVHLYNSTSTLQRRVVFHQDMDGIVDIALTGARLCRKYEEQLSGTAVTYEYSPESYTGTELEFAARICNEVAETFEIGNGRKMIVNLPATVEMATPNVYADSIEWMGRHLYQREDIILSLHPHNDRGTGVAAAELGYLAGADRIEGCLFGNGERTGNVDLVTLGLNLLTQGVDPQIDFSDIEEIRRTVEYCNQLPVPERSPYGGDLVFTAFSGSHQDAIKKGFEAMERDAEQQGVGVDELEWAVPYLPIDPKDVGRSYEAVIRVNSQSGKGGVAYLLKSEYGIDLPRRAQIEFSGVVQKFTETSGSEVSAQQLWTIFRDEYLPSRDGSGSTWGHYRITSISTHAEDQANTVLEIGLDVGGEHKERTAQGTGPIDALINLFNREGMDVRLLDYTEHTLSASANAQAASYVELAVGDRVLWGAGMDSNTTRASLKAVISAVNRAVRDAQEAAQD.

The Pyruvate carboxyltransferase domain maps to 40–314; that stretch reads PRWCAVDLRD…DPQIDFSDIE (275 aa). Mg(2+) contacts are provided by aspartate 49, histidine 253, histidine 255, and asparagine 289. The regulatory domain stretch occupies residues 456–584; sequence SRDGSGSTWG…VRDAQEAAQD (129 aa).

It belongs to the alpha-IPM synthase/homocitrate synthase family. LeuA type 2 subfamily. Homodimer. It depends on Mg(2+) as a cofactor.

Its subcellular location is the cytoplasm. The catalysed reaction is 3-methyl-2-oxobutanoate + acetyl-CoA + H2O = (2S)-2-isopropylmalate + CoA + H(+). The protein operates within amino-acid biosynthesis; L-leucine biosynthesis; L-leucine from 3-methyl-2-oxobutanoate: step 1/4. Catalyzes the condensation of the acetyl group of acetyl-CoA with 3-methyl-2-oxobutanoate (2-ketoisovalerate) to form 3-carboxy-3-hydroxy-4-methylpentanoate (2-isopropylmalate). The protein is 2-isopropylmalate synthase of Kocuria rhizophila (strain ATCC 9341 / DSM 348 / NBRC 103217 / DC2201).